Reading from the N-terminus, the 228-residue chain is MFSIRMNKVLQGFVCLMLTHRIVGYPMDCKEDQDGTRCPSISLDKLLDRIIQHAELIYRVSEESCTLFEEMYIPSSIRAQLSRGGNACSTRSVPIQGRIQQISDKWLLHSTLVVIQSWTGPLQSLQITMDLYDNAPDGLLNKTKWMSTKLMNLEQGVTVLIRKMLNEDILVSDPSQNLTHFATQPNMVESVLTDYTLLTCFRKDAHRVETFLKLLKCRQSDRLSCFLY.

The signal sequence occupies residues 1–24 (MFSIRMNKVLQGFVCLMLTHRIVG). 3 disulfides stabilise this stretch: C29–C38, C88–C200, and C217–C225. N-linked (GlcNAc...) asparagine glycosylation is found at N141 and N177.

Belongs to the somatotropin/prolactin family.

The protein localises to the secreted. This Anguilla anguilla (European freshwater eel) protein is Somatolactin.